We begin with the raw amino-acid sequence, 120 residues long: Large ribosomal subunit protein bL19 (120 aa).

The protein belongs to the bacterial ribosomal protein bL19 family.

Functionally, this protein is located at the 30S-50S ribosomal subunit interface and may play a role in the structure and function of the aminoacyl-tRNA binding site. The chain is Large ribosomal subunit protein bL19 from Picosynechococcus sp. (strain ATCC 27264 / PCC 7002 / PR-6) (Agmenellum quadruplicatum).